A 153-amino-acid polypeptide reads, in one-letter code: Cytochrome c-type biogenesis protein CcmE (153 aa).

Topologically, residues 1-8 (MTPVQRRR) are cytoplasmic. A helical; Signal-anchor for type II membrane protein transmembrane segment spans residues 9–29 (LVWVLLALLASGLATALVAMA). Over 30 to 153 (LERNIAYLYT…DVPVTAPEVR (124 aa)) the chain is Periplasmic. Heme-binding residues include H123 and Y127.

It belongs to the CcmE/CycJ family.

Its subcellular location is the cell inner membrane. Heme chaperone required for the biogenesis of c-type cytochromes. Transiently binds heme delivered by CcmC and transfers the heme to apo-cytochromes in a process facilitated by CcmF and CcmH. The protein is Cytochrome c-type biogenesis protein CcmE of Stenotrophomonas maltophilia (strain R551-3).